Here is a 520-residue protein sequence, read N- to C-terminus: Catalase easC (520 aa).

Residue His-71 is part of the active site. Tyr-361 is a binding site for heme.

It belongs to the catalase family. It depends on heme as a cofactor.

It functions in the pathway alkaloid biosynthesis; ergot alkaloid biosynthesis. Its function is as follows. Catalase; part of the gene cluster that mediates the biosynthesis of fumiclavanine C, a fungal ergot alkaloid. DmaW catalyzes the first step of ergot alkaloid biosynthesis by condensing dimethylallyl diphosphate (DMAP) and tryptophan to form 4-dimethylallyl-L-tryptophan. The second step is catalyzed by the methyltransferase easF that methylates 4-dimethylallyl-L-tryptophan in the presence of S-adenosyl-L-methionine, resulting in the formation of 4-dimethylallyl-L-abrine. The catalase easC and the FAD-dependent oxidoreductase easE then transform 4-dimethylallyl-L-abrine to chanoclavine-I which is further oxidized by EasD in the presence of NAD(+), resulting in the formation of chanoclavine-I aldehyde. EasA reduces chanoclavine-I aldehyde to dihydrochanoclavine-I aldehyde that spontaneously dehydrates to form 6,8-dimethyl-6,7-didehydroergoline. EasG then catalyzes the reduction of 6,8-dimethyl-6,7-didehydroergoline to form festuclavine. Hydrolysis of festuclavine by easM then leads to the formation of fumigaclavine B which is in turn acetylated by easN to fumigaclavine A. Finally, easL catalyzes the conversion of fumigaclavine A into fumigaclavine C by attaching a dimethylallyl moiety to C-2 of the indole nucleus. In Aspergillus fumigatus (strain ATCC MYA-4609 / CBS 101355 / FGSC A1100 / Af293) (Neosartorya fumigata), this protein is Catalase easC.